The following is a 500-amino-acid chain: ATP synthase subunit beta (500 aa).

157–164 lines the ATP pocket; it reads GGAGVGKT.

This sequence belongs to the ATPase alpha/beta chains family. In terms of assembly, F-type ATPases have 2 components, CF(1) - the catalytic core - and CF(0) - the membrane proton channel. CF(1) has five subunits: alpha(3), beta(3), gamma(1), delta(1), epsilon(1). CF(0) has three main subunits: a(1), b(2) and c(9-12). The alpha and beta chains form an alternating ring which encloses part of the gamma chain. CF(1) is attached to CF(0) by a central stalk formed by the gamma and epsilon chains, while a peripheral stalk is formed by the delta and b chains.

The protein resides in the cell inner membrane. The catalysed reaction is ATP + H2O + 4 H(+)(in) = ADP + phosphate + 5 H(+)(out). Its function is as follows. Produces ATP from ADP in the presence of a proton gradient across the membrane. The catalytic sites are hosted primarily by the beta subunits. The polypeptide is ATP synthase subunit beta (Salinibacter ruber (strain DSM 13855 / M31)).